A 372-amino-acid chain; its full sequence is MLVWLFGWLGQYYAPFSAVSSLTLRALLAVITALAFSMIFGSRVIRRLRALKYGQAIRNDGPQSHLVKTGTPTMGGVLILSAIGVSTLLWARLNNPYVWILLIVMIIFGAVGWADDWLKIKYKNPKGLIARKKYFWLSMGALFVGISLYYIATLQPNVVTTREMQDLLLPIFKDWMIPFSAVPFGIGFIIFTYFVINGASNAVNLTDGLDGLAILPVVLVAAGLGAMAYVSGDVRFADYLHVPYIAYNSEVIIVCGAMIGAGLGFLWFNAHPAQVFMGDVGALSLGAMLGTIAVMTRQEIAFAIMGGLFVAEALSVMLQVGSYKLRKKRVFRMAPLHHHFEEIGWKETQVVARFWIIAIILVILGLMTLKLR.

The next 10 helical transmembrane spans lie at 21–41 (SLTL…MIFG), 71–91 (TPTM…LLWA), 98–118 (VWIL…DDWL), 134–154 (YFWL…IATL), 176–196 (MIPF…YFVI), 211–231 (GLAI…AYVS), 251–271 (VIIV…FNAH), 275–295 (VFMG…IAVM), 300–320 (IAFA…MLQV), and 349–369 (QVVA…LMTL).

The protein belongs to the glycosyltransferase 4 family. MraY subfamily. Requires Mg(2+) as cofactor.

Its subcellular location is the cell inner membrane. It carries out the reaction UDP-N-acetyl-alpha-D-muramoyl-L-alanyl-gamma-D-glutamyl-meso-2,6-diaminopimeloyl-D-alanyl-D-alanine + di-trans,octa-cis-undecaprenyl phosphate = di-trans,octa-cis-undecaprenyl diphospho-N-acetyl-alpha-D-muramoyl-L-alanyl-D-glutamyl-meso-2,6-diaminopimeloyl-D-alanyl-D-alanine + UMP. It functions in the pathway cell wall biogenesis; peptidoglycan biosynthesis. In terms of biological role, catalyzes the initial step of the lipid cycle reactions in the biosynthesis of the cell wall peptidoglycan: transfers peptidoglycan precursor phospho-MurNAc-pentapeptide from UDP-MurNAc-pentapeptide onto the lipid carrier undecaprenyl phosphate, yielding undecaprenyl-pyrophosphoryl-MurNAc-pentapeptide, known as lipid I. The chain is Phospho-N-acetylmuramoyl-pentapeptide-transferase from Psychrobacter arcticus (strain DSM 17307 / VKM B-2377 / 273-4).